The chain runs to 65 residues: Beta-defensin 41 (65 aa).

An N-terminal signal peptide occupies residues 1-19; it reads MKFHLFFFILLFGATILTA. Intrachain disulfides connect cysteine 35–cysteine 63, cysteine 42–cysteine 56, and cysteine 46–cysteine 64.

The protein belongs to the beta-defensin family. In terms of tissue distribution, isoform 2 is epididymis-specific and expressed mainly in the proximal caput.

The protein localises to the secreted. Has bactericidal activity. Its function is as follows. Isoform 2 may play a role in the antimicrobial protection of sperm and urogenital tract epithelia. The chain is Beta-defensin 41 from Mus musculus (Mouse).